The chain runs to 372 residues: Cytochrome b (372 aa).

4 consecutive transmembrane segments (helical) span residues 25–45 (FGSM…FLAI), 69–90 (WIMQ…YIHI), 105–125 (WLSG…GYVL), and 170–190 (FFAL…IHII). Residues H75 and H89 each coordinate heme b. Residues H174 and H188 each contribute to the heme b site. A ubiquinone is bound at residue H193. A run of 4 helical transmembrane segments spans residues 218-238 (YKDM…LSFS), 280-300 (LGGT…PFTH), 312-332 (LSQI…WTAT), and 339-358 (FISI…IMNP).

This sequence belongs to the cytochrome b family. In terms of assembly, the cytochrome bc1 complex contains 3 respiratory subunits (MT-CYB, CYC1 and UQCRFS1), 2 core proteins (UQCRC1 and UQCRC2) and probably 6 low-molecular weight proteins. It depends on heme b as a cofactor.

It is found in the mitochondrion inner membrane. In terms of biological role, component of the ubiquinol-cytochrome c reductase complex (complex III or cytochrome b-c1 complex) that is part of the mitochondrial respiratory chain. The b-c1 complex mediates electron transfer from ubiquinol to cytochrome c. Contributes to the generation of a proton gradient across the mitochondrial membrane that is then used for ATP synthesis. The chain is Cytochrome b (MT-CYB) from Walterinnesia aegyptia (Desert black snake).